The primary structure comprises 43 residues: METATLVAISISGSLVSFTGYALYTAFGQPAQQLRDPFEEHGD.

A helical transmembrane segment spans residues 5 to 27 (TLVAISISGSLVSFTGYALYTAF).

This sequence belongs to the PsbN family.

Its subcellular location is the plastid. It is found in the chloroplast thylakoid membrane. May play a role in photosystem I and II biogenesis. The protein is Protein PsbN of Lactoris fernandeziana.